The chain runs to 435 residues: Fibrous sheath-interacting protein 1 (435 aa).

Disordered regions lie at residues 1-109 (MPMD…DPKL) and 354-393 (SQSH…ESRL). Over residues 18-32 (SSSRSRPGSRSSNGS) the composition is skewed to low complexity. The span at 50–63 (KLNSGQEGHTSNSG) shows a compositional bias: polar residues. A compositionally biased stretch (basic and acidic residues) spans 64–87 (VEERRNSNDAKWADDSKTKPAKES). 2 positions are modified to phosphoserine: Ser87 and Ser88. A coiled-coil region spans residues 108 to 154 (KLEETNAVLQNAIRKMHRLDKLLAKKQCREKEVKKQGLEMRVKLWEE). 2 stretches are compositionally biased toward basic and acidic residues: residues 355 to 371 (QSHK…ERNT) and 378 to 393 (KILR…ESRL).

The protein belongs to the FSIP1 family. May interact with AKAP4. Detected in male germ cells and testis.

This is Fibrous sheath-interacting protein 1 (Fsip1) from Mus musculus (Mouse).